The sequence spans 452 residues: F-box only protein 47 (452 aa).

Residues 41–91 enclose the F-box domain; that stretch reads FGNFKALPLEIFQIILKYLSVKDISMLSMVSKTVSQHIINYISTSSGSKRL.

Part of a SCF (SKP1-cullin-F-box) protein ligase complex. Widely expressed, with highest levels in kidney, liver and pancreas. Down-regulated in tumors.

Its function is as follows. Probably recognizes and binds to some phosphorylated proteins and promotes their ubiquitination and degradation. This Homo sapiens (Human) protein is F-box only protein 47.